Here is a 453-residue protein sequence, read N- to C-terminus: Secreted aspartic protease 10 (453 aa).

The first 20 residues, Met1–Cys20, serve as a signal peptide directing secretion. The Peptidase A1 domain maps to Tyr52–Ala372. Asp70 is an active-site residue. Pepstatin A is bound at residue Asp70–Gly72. Cys85 and Cys112 are joined by a disulfide. Asn115 and Asn128 each carry an N-linked (GlcNAc...) asparagine glycan. Val138–Asp139 is a binding site for pepstatin A. N-linked (GlcNAc...) asparagine glycosylation is found at Asn168, Asn208, Asn211, and Asn245. The active site involves Asp266. Asp266–Thr270 lines the pepstatin A pocket. Residue Asn287 is glycosylated (N-linked (GlcNAc...) asparagine). A disulfide bridge links Cys301 with Cys333. A disordered region spans residues Asn387–Asn432. A compositionally biased stretch (low complexity) spans Thr397–Ser417. Polar residues predominate over residues Lys423–Asn432. Asn424 carries N-linked (GlcNAc...) asparagine glycosylation. Ser429 is lipidated: GPI-anchor amidated serine. Residues Ser430–Ile453 constitute a propeptide, removed in mature form.

Belongs to the peptidase A1 family. In terms of processing, the GPI-anchor is attached to the protein in the endoplasmic reticulum and serves to target the protein to the cell surface. There, the glucosamine-inositol phospholipid moiety is cleaved off and the GPI-modified mannoprotein is covalently attached via its lipidless GPI glycan remnant to the 1,6-beta-glucan of the outer cell wall layer.

Its subcellular location is the secreted. It is found in the cell membrane. It catalyses the reaction Preferential cleavage at the carboxyl of hydrophobic amino acids, but fails to cleave 15-Leu-|-Tyr-16, 16-Tyr-|-Leu-17 and 24-Phe-|-Phe-25 of insulin B chain. Activates trypsinogen, and degrades keratin.. In terms of biological role, secreted aspartic peptidases (SAPs) are a group of ten acidic hydrolases considered as key virulence factors. These enzymes supply the fungus with nutrient amino acids as well as are able to degrade the selected host's proteins involved in the immune defense. Required for cell surface integrity and cell separation during budding. The polypeptide is Secreted aspartic protease 10 (Candida albicans (strain SC5314 / ATCC MYA-2876) (Yeast)).